Reading from the N-terminus, the 178-residue chain is Fatty-acid and retinol-binding protein 1 (178 aa).

The first 16 residues, 1–16 (MYHQLILMALIGVIMA), serve as a signal peptide directing secretion. Asparagine 44 and asparagine 75 each carry an N-linked (GlcNAc...) asparagine glycan. 2 coiled-coil regions span residues 67–89 (DAAL…ELRN) and 123–154 (KLDM…LKAT). The N-linked (GlcNAc...) asparagine glycan is linked to asparagine 157.

This sequence belongs to the fatty-acid and retinol-binding protein (FARBP) family. N-glycosylated.

The protein localises to the secreted. Binds retinol and different fatty acids. The chain is Fatty-acid and retinol-binding protein 1 from Onchocerca gutturosa.